Consider the following 357-residue polypeptide: GDP-mannose transporter 2 (357 aa).

Residues 1–43 (MASTRNGISKDELLPTYELQSQRDVENSGSVTSFASKISNNAA) lie on the Cytoplasmic side of the membrane. Residues 44 to 64 (AAVLAYCLSSISMTLVNKYVV) form a helical membrane-spanning segment. The Lumenal segment spans residues 65-68 (SGAS). The helical transmembrane segment at 69–89 (WNLSFLYLAIQSFIGTVAIMV) threads the bilayer. The Cytoplasmic portion of the chain corresponds to 90–107 (CKKAGLIQNLGLFDLKKA). The chain crosses the membrane as a helical span at residues 108–128 (QTWLPISLLLVGMIYTGNKAL). Glutamine 129 is a topological domain (lumenal). Residues 130–150 (FLSVPVYTIFKNLTIIVIAYG) form a helical membrane-spanning segment. Residues 151 to 161 (EVFMVGGSVKP) lie on the Cytoplasmic side of the membrane. A helical membrane pass occupies residues 162-182 (LALLSFGLMVLSSVVAAWADI). Residues 183–196 (QIATAATAKASSDS) lie on the Lumenal side of the membrane. The chain crosses the membrane as a helical span at residues 197–217 (AVATLSALNAGYAWMGTNVVF). Residues 218–238 (SASYALGMRRVIKKTNFDNWD) lie on the Cytoplasmic side of the membrane. Residues 239 to 259 (VMFYNNLLSVPILLLSSLLVE) form a helical membrane-spanning segment. Topologically, residues 260–277 (DWSSENLQRNFPAESRQS) are lumenal. Residues 278–298 (LVIGIFYSGVAAIFISYCTAW) form a helical membrane-spanning segment. Over 299-306 (CVRATSST) the chain is Cytoplasmic. The chain crosses the membrane as a helical span at residues 307 to 327 (TYAMVGALNKLPLAVAGIVFF). Residues 328-332 (AAPVT) lie on the Lumenal side of the membrane. A helical membrane pass occupies residues 333–352 (FGSVSAIVLGFISGLVYTWA). Topologically, residues 353 to 357 (KSTGA) are cytoplasmic.

The protein belongs to the TPT transporter family. SLC35D subfamily. Homooligomer.

It localises to the golgi apparatus membrane. Its subcellular location is the cytoplasmic vesicle membrane. The protein localises to the endoplasmic reticulum membrane. Functionally, involved in the import of GDP-mannose from the cytoplasm into the Golgi lumen. The sequence is that of GDP-mannose transporter 2 (gmt2) from Emericella nidulans (strain FGSC A4 / ATCC 38163 / CBS 112.46 / NRRL 194 / M139) (Aspergillus nidulans).